Consider the following 77-residue polypeptide: Conotoxin Vc1 (77 aa).

The signal sequence occupies residues 1–22 (MRTSGRLLLLCLAVGLLLESQA). Propeptides lie at residues 23–58 (HPNADAGDATRDVGSDRTSVELSKMLKGWQAEKGQR) and 73–77 (RRSFY).

This sequence belongs to the conotoxin H superfamily. In terms of tissue distribution, expressed by the venom duct.

It is found in the secreted. In terms of biological role, probable toxin. This chain is Conotoxin Vc1, found in Conus victoriae (Queen Victoria cone).